Reading from the N-terminus, the 154-residue chain is Myoglobin (154 aa).

Residues 2-148 (GLSDGEWQLV…FRNDMAAKYK (147 aa)) enclose the Globin domain. At Ser-4 the chain carries Phosphoserine. Residue His-65 coordinates nitrite. His-65 contacts O2. Thr-68 carries the post-translational modification Phosphothreonine. His-94 provides a ligand contact to heme b.

This sequence belongs to the globin family. As to quaternary structure, monomeric.

Its subcellular location is the cytoplasm. The protein resides in the sarcoplasm. The enzyme catalyses Fe(III)-heme b-[protein] + nitric oxide + H2O = Fe(II)-heme b-[protein] + nitrite + 2 H(+). It carries out the reaction H2O2 + AH2 = A + 2 H2O. Its function is as follows. Monomeric heme protein which primary function is to store oxygen and facilitate its diffusion within muscle tissues. Reversibly binds oxygen through a pentacoordinated heme iron and enables its timely and efficient release as needed during periods of heightened demand. Depending on the oxidative conditions of tissues and cells, and in addition to its ability to bind oxygen, it also has a nitrite reductase activity whereby it regulates the production of bioactive nitric oxide. Under stress conditions, like hypoxia and anoxia, it also protects cells against reactive oxygen species thanks to its pseudoperoxidase activity. This chain is Myoglobin (MB), found in Aotus trivirgatus (Three-striped night monkey).